Reading from the N-terminus, the 601-residue chain is Deoxyhypusine synthase (601 aa).

NAD(+) is bound by residues 109-113 and 184-186; these read ANLMG and SGG. 189–190 provides a ligand contact to spermidine; sequence EH. Residues 210–242 form a disordered region; that stretch reads GHVSSTVSSEATAPPKGLQQRAEKPLGTRAAAG. A compositionally biased stretch (polar residues) spans 211–220; that stretch reads HVSSTVSSEA. NAD(+) is bound at residue D398. The segment at 411-451 is disordered; it reads PAARPAHRKGGPVADENAGNSKELKRSRKASSSSSTSATAV. Residues 440–451 are compositionally biased toward low complexity; that stretch reads ASSSSSTSATAV. Position 489 (G489) interacts with NAD(+). A spermidine-binding site is contributed by H494. 514-515 contributes to the NAD(+) binding site; sequence NG. Residues 520 to 522 and 529 to 535 contribute to the spermidine site; these read GSD and EALSWGK. Residue K535 is the Nucleophile of the active site. 548-549 lines the NAD(+) pocket; that stretch reads EV. The interval 568 to 601 is disordered; sequence RRATDDAQPRRKRSSRGARPPQDVSGHSHLCRGE.

This sequence belongs to the deoxyhypusine synthase family. In terms of assembly, homodimer. NAD(+) serves as cofactor.

It carries out the reaction [eIF5A protein]-L-lysine + spermidine = [eIF5A protein]-deoxyhypusine + propane-1,3-diamine. The protein operates within protein modification; eIF5A hypusination. With respect to regulation, N1-guanyl-1,7-diaminoheptane has a small inhibitory effect on activity. Catalyzes the NAD-dependent oxidative cleavage of spermidine and the subsequent transfer of the butylamine moiety of spermidine to the epsilon-amino group of a specific lysine residue of the eIF-5A precursor protein to form the intermediate deoxyhypusine residue. This chain is Deoxyhypusine synthase, found in Leishmania donovani.